The chain runs to 128 residues: Tachykinin-4 (128 aa).

The N-terminal stretch at 1–16 (MLPLLALLLLIGPSVC) is a signal peptide. Positions 17 to 54 (TTAGDREELAFGAEAESWVTVNLKGIPVPSIELKLQEL) are excised as a propeptide. Met-66 is subject to Methionine amide. Residues 69-128 (RVGGYQLGRIVQDLLGTRGLSIEGTCRQAASQQRARPGAVTRESLQSREEDEAPLTTSNV) constitute a propeptide that is removed on maturation. A disordered region spans residues 96–128 (QAASQQRARPGAVTRESLQSREEDEAPLTTSNV).

This sequence belongs to the tachykinin family. In terms of tissue distribution, expressed in hematopoietic cells with highest levels in pre- and pro-B cells but not in later developmental stages. Also detected in uterus, skeletal muscle, brain, spleen, stomach, skin and lactating mammary gland and in cells of myeloid lineage including dendritic and microglial cells and macrophages. In uterus, highest expression is observed in non-pregnant diestrus mice and in day 5 pregnant mice. Compared with mice in diestrus, decreases 2.6-fold in uteri from non-pregnant mice in estrus and 10.2-fold in day 17 pregnant mice. Detected at sites of chronic inflammation such as granulomas.

It is found in the secreted. In terms of biological role, tachykinins are active peptides which excite neurons, evoke behavioral responses, are potent vasodilators and secretagogues, and contract (directly or indirectly) many smooth muscles. Hemokinin induces plasma extravasation, mast cell degranulation, muscle contraction, salivary secretion and scratching behavior. Increases sperm motility. Induces potent analgesic effects and may play a role in pain modulation. Promotes survival of bone marrow B lineage cells and of cultured LPS-stimulated pre-B cells and may act as an autocrine factor required for B-cell survival and proliferation. Lowers systemic arterial pressure following intravenous injection. Induces interferon-gamma production and may play a role in the inflammatory response. Shows potent affinity and specificity for the NK-1 receptor. The sequence is that of Tachykinin-4 from Mus musculus (Mouse).